We begin with the raw amino-acid sequence, 244 residues long: Large ribosomal subunit protein uL30 (244 aa).

Belongs to the universal ribosomal protein uL30 family.

The polypeptide is Large ribosomal subunit protein uL30 (RPL7) (Candida glabrata (strain ATCC 2001 / BCRC 20586 / JCM 3761 / NBRC 0622 / NRRL Y-65 / CBS 138) (Yeast)).